Reading from the N-terminus, the 534-residue chain is Phosphoenolpyruvate carboxykinase (ATP) (534 aa).

Residues arginine 59, tyrosine 200, and lysine 206 each coordinate substrate. ATP contacts are provided by residues lysine 206, histidine 225, and 242 to 250 (GLSGTGKTT). 2 residues coordinate Mn(2+): lysine 206 and histidine 225. Position 263 (aspartate 263) interacts with Mn(2+). Residues glutamate 291, arginine 327, 443–444 (RI), and threonine 449 contribute to the ATP site. Arginine 327 is a substrate binding site.

Belongs to the phosphoenolpyruvate carboxykinase (ATP) family. The cofactor is Mn(2+).

Its subcellular location is the cytoplasm. It catalyses the reaction oxaloacetate + ATP = phosphoenolpyruvate + ADP + CO2. The protein operates within carbohydrate biosynthesis; gluconeogenesis. In terms of biological role, involved in the gluconeogenesis. Catalyzes the conversion of oxaloacetate (OAA) to phosphoenolpyruvate (PEP) through direct phosphoryl transfer between the nucleoside triphosphate and OAA. The chain is Phosphoenolpyruvate carboxykinase (ATP) from Agathobacter rectalis (strain ATCC 33656 / DSM 3377 / JCM 17463 / KCTC 5835 / VPI 0990) (Eubacterium rectale).